The primary structure comprises 824 residues: Acyl-homoserine lactone acylase QuiP (824 aa).

The signal sequence occupies residues 1 to 26 (MASPALRHFLPRFGAAAAAASFLSLA). The active-site Nucleophile is the Ser-264.

The protein belongs to the peptidase S45 family. In terms of assembly, heterodimer of an alpha subunit and a beta subunit processed from the same precursor.

It is found in the periplasm. The enzyme catalyses an N-acyl-L-homoserine lactone + H2O = L-homoserine lactone + a carboxylate. Catalyzes the deacylation of acyl-homoserine lactone (AHL or acyl-HSL), releasing homoserine lactone (HSL) and the corresponding fatty acid. Possesses a specificity for the degradation of long-chain acyl-HSLs (side chains of seven or more carbons in length). The sequence is that of Acyl-homoserine lactone acylase QuiP (quiP) from Pseudomonas syringae pv. tomato (strain ATCC BAA-871 / DC3000).